The primary structure comprises 281 residues: MSSYFVNSFCGRYPNGADFQLHNYGDHSTANDQYRDSTAMHSSRYGYGYNGMDLTVGRAGTGHFVGNERTQGYSPSHSAATTPSVEPVRYTQSANSTGTSSLSPPPDPLPCSSVASSSPVTETQSQHRAVKNSITTPCSTPCSSSNGGTLLLNRDCVSKASPLEEEKPAGSAPTTPQNVSDSTQPQIYPWMRKLHINHDLAGPEGKRARTAYTRYQTLELEKEFHFNRYLTRRRRIEIAHALCLSERQIKIWFQNRRMKWKKDNKLKSMNMAAAGGGGYRP.

Disordered regions lie at residues 65–144 (VGNE…PCSS) and 162–183 (PLEE…SDST). 2 stretches are compositionally biased toward polar residues: residues 68–99 (ERTQ…STGT) and 114–127 (VASS…QSQH). Low complexity predominate over residues 132-144 (NSITTPCSTPCSS). Over residues 172–183 (APTTPQNVSDST) the composition is skewed to polar residues. Positions 187–192 (IYPWMR) match the Antp-type hexapeptide motif. Positions 205–264 (GKRARTAYTRYQTLELEKEFHFNRYLTRRRRIEIAHALCLSERQIKIWFQNRRMKWKKDN) form a DNA-binding region, homeobox.

It belongs to the Antp homeobox family.

The protein resides in the nucleus. Its function is as follows. Sequence-specific transcription factor which is part of a developmental regulatory system that provides cells with specific positional identities on the anterior-posterior axis. The protein is Homeobox protein Hox-A5 (hoxa5) of Morone saxatilis (Striped bass).